The chain runs to 257 residues: Probable ABC transporter arginine-binding protein ArtJ (257 aa).

Residues 1-23 (MCIKRKKTWIAFLAVVCSFCLTG) form the signal peptide. 6 residues coordinate L-arginine: Asn-41, Glu-48, Gly-100, Ser-102, Arg-107, and Tyr-151.

Belongs to the bacterial solute-binding protein 3 family.

It is found in the secreted. The protein localises to the cell surface. Probably part of an ABC transporter complex involved in arginine transport. Binds arginine. Interacts with host epithelial cells, suggesting a role in host-cell adhesion during infection. In Chlamydia trachomatis serovar D (strain ATCC VR-885 / DSM 19411 / UW-3/Cx), this protein is Probable ABC transporter arginine-binding protein ArtJ.